The following is a 423-amino-acid chain: MKVLGVVVEYNPFHNGHLYHLKSAKKLVKPDFTIAVMSGNFCQRGEPAIVNKFARAKMALLNGIDVVLEIPTVYALQDAGGFAFGSVGLMHKLGLVTDIVFGSESADISFLEKISKILYENSKEFDYLIKRELKKGLSYPNARKFALQKFLKTDLDTIKKLENSNDILGIEYIKAIFKYNSNIKYHVIKRVGAKYNEQNLSGKFSSATAIRNAIKFEKNIKEYVPESTYLILKDEFEKGRGPVFLENLEQFILSEFRLKARENLENIYGFSEGLDKRFIDSANISTNLKEFIENIKAKRFTFSRIRRLIFHAIFNFEKNYMEFSNKLGPQYARVLGFTTKGQEFLSYAKKKSTIPIITNPSLKNKILKDVLKNSERKWDFNISLYNWQFEKDILASNIYTLFYPNSSQRKSGMDFRKPIIIEG.

ATP contacts are provided by residues 7–20 (VVEY…HLYH), Gly102, Asn165, and Arg190.

Belongs to the TmcAL family.

Its subcellular location is the cytoplasm. The catalysed reaction is cytidine(34) in elongator tRNA(Met) + acetate + ATP = N(4)-acetylcytidine(34) in elongator tRNA(Met) + AMP + diphosphate. In terms of biological role, catalyzes the formation of N(4)-acetylcytidine (ac(4)C) at the wobble position of elongator tRNA(Met), using acetate and ATP as substrates. First activates an acetate ion to form acetyladenylate (Ac-AMP) and then transfers the acetyl group to tRNA to form ac(4)C34. This chain is tRNA(Met) cytidine acetate ligase, found in Thermosipho africanus (strain TCF52B).